Reading from the N-terminus, the 572-residue chain is NADP-dependent malic enzyme (572 aa).

Position 1 is an N-acetylmethionine (M1). The active-site Proton donor is Y102. R155 is an NADP(+) binding site. K173 acts as the Proton acceptor in catalysis. Residues E245, D246, and D269 each coordinate a divalent metal cation. NADP(+) contacts are provided by residues D269 and 301–318 (GAGEAALGIAHLIVMAME). S336 is subject to Phosphoserine. N408 serves as a coordination point for NADP(+).

Belongs to the malic enzymes family. As to quaternary structure, homotetramer. Requires Mg(2+) as cofactor. Mn(2+) is required as a cofactor. Ubiquitous. Up-regulated by 3,5,3'-triiodo-L-thyronine in the liver, kidney and heart.

The protein resides in the cytoplasm. It carries out the reaction (S)-malate + NADP(+) = pyruvate + CO2 + NADPH. The catalysed reaction is oxaloacetate + H(+) = pyruvate + CO2. Its function is as follows. Catalyzes the oxidative decarboxylation of (S)-malate in the presence of NADP(+) and divalent metal ions, and decarboxylation of oxaloacetate. This is NADP-dependent malic enzyme (Me1) from Rattus norvegicus (Rat).